The following is a 200-amino-acid chain: Recombination protein RecR (200 aa).

The C4-type zinc-finger motif lies at 59–74; it reads CSVCFHLSADPVCDIC. The 95-residue stretch at 82-176 folds into the Toprim domain; sequence TVICVVADSR…RVTRIAFGLP (95 aa).

It belongs to the RecR family.

In terms of biological role, may play a role in DNA repair. It seems to be involved in an RecBC-independent recombinational process of DNA repair. It may act with RecF and RecO. The sequence is that of Recombination protein RecR from Acaryochloris marina (strain MBIC 11017).